The primary structure comprises 539 residues: MNRRNLLKASMALAAYGSVSASGLYAARALAAAADGEIEHFDFAELQAHAKKLAGKGYVSNKQVLPPVLADMTPLQFNAIRYDPNHSLWKDVHGQLDVHFFHVGMGFKTPVRMYSVDPQNKQAREVHFRHDLFNYESSGIDKNLVKGDLGFAGFKLFKAPEIAINDVVSFLGASYFRAVDSNKQYGLSARGLAIDSYAKRQEEFPDFTKFWFETPDKNATRFVVYALLDSPSATGAYRFDIDCQAGQVVMEIDAHINARTDIQQLGISPMTSMFSCGTHERRMCDTIHPQIHDSDRLSMWRGNGEWICRPLNNPAKPQFSAFADTDPKGFGLVQSDHEFSSYQDTVVWYSRRPSLWVEPITAWGEGEVSLLELPTTGETMDNIVVFWTPKTPVKAGDSMNYGYKLFWSPLPPVSTPLAQVHATRSGMGGFLEGWAPGEHYPKTWARRFAVDFNGGGLDRLPEGTGIEPIVTVTHGKVQDFNILVLPDIKGYRVTFDWVPDSDSVEPVEMRMFIRTGDRTLSETWMYQYFPPAPDRRKYP.

The tat-type signal signal peptide spans 1–29 (MNRRNLLKASMALAAYGSVSASGLYAARA).

This sequence belongs to the OpgD/OpgG family. Post-translationally, predicted to be exported by the Tat system. The position of the signal peptide cleavage has not been experimentally proven.

The protein localises to the periplasm. The protein operates within glycan metabolism; osmoregulated periplasmic glucan (OPG) biosynthesis. Probably involved in the control of the structural glucose backbone of osmoregulated periplasmic glucans (OPGs). The chain is Glucans biosynthesis protein D from Pseudomonas savastanoi pv. phaseolicola (strain 1448A / Race 6) (Pseudomonas syringae pv. phaseolicola (strain 1448A / Race 6)).